Consider the following 81-residue polypeptide: Apolipoprotein C-I, acidic form (81 aa).

A signal peptide spans 1-24 (MRLFLSLLVVVLSIVLEGPTPAQG).

The protein belongs to the apolipoprotein C1 family.

Its subcellular location is the secreted. This Cercocebus atys (Sooty mangabey) protein is Apolipoprotein C-I, acidic form (APOC1A).